The primary structure comprises 562 residues: NAD-dependent malic enzyme (562 aa).

The active-site Proton donor is Tyr-101. An NAD(+)-binding site is contributed by Arg-154. Lys-172 acts as the Proton acceptor in catalysis. Positions 243, 244, and 267 each coordinate a divalent metal cation. NAD(+)-binding residues include Asp-267 and Asn-415.

This sequence belongs to the malic enzymes family. As to quaternary structure, homotetramer. Requires Mg(2+) as cofactor. It depends on Mn(2+) as a cofactor.

It carries out the reaction (S)-malate + NAD(+) = pyruvate + CO2 + NADH. The catalysed reaction is oxaloacetate + H(+) = pyruvate + CO2. The polypeptide is NAD-dependent malic enzyme (Shewanella baltica (strain OS223)).